We begin with the raw amino-acid sequence, 128 residues long: 2-iminobutanoate/2-iminopropanoate deaminase (128 aa).

Belongs to the RutC family.

Its subcellular location is the cytoplasm. It catalyses the reaction 2-iminobutanoate + H2O = 2-oxobutanoate + NH4(+). The enzyme catalyses 2-iminopropanoate + H2O = pyruvate + NH4(+). Catalyzes the hydrolytic deamination of enamine/imine intermediates that form during the course of normal metabolism. May facilitate the release of ammonia from these potentially toxic reactive metabolites, reducing their impact on cellular components. It may act on enamine/imine intermediates formed by several types of pyridoxal-5'-phosphate-dependent dehydratases including L-threonine dehydratase. Preferentially digests Leu and Met in cooperation with L-amino acid oxidase, but digests Phe poorly. This Dermatophagoides farinae (American house dust mite) protein is 2-iminobutanoate/2-iminopropanoate deaminase.